Here is a 517-residue protein sequence, read N- to C-terminus: Ribose import ATP-binding protein RbsA 2 (517 aa).

2 ABC transporter domains span residues 10 to 245 (LRIE…GRSI) and 255 to 498 (DAGE…VSTH). 42-49 (GENGAGKS) is a binding site for ATP. Positions 497-517 (THTGNSPHSGGTDGTEASRGH) are disordered.

Belongs to the ABC transporter superfamily. Ribose importer (TC 3.A.1.2.1) family. The complex is composed of an ATP-binding protein (RbsA), two transmembrane proteins (RbsC) and a solute-binding protein (RbsB).

Its subcellular location is the cell membrane. It catalyses the reaction D-ribose(out) + ATP + H2O = D-ribose(in) + ADP + phosphate + H(+). Functionally, part of the ABC transporter complex RbsABC involved in ribose import. Responsible for energy coupling to the transport system. The chain is Ribose import ATP-binding protein RbsA 2 from Streptomyces coelicolor (strain ATCC BAA-471 / A3(2) / M145).